An 88-amino-acid chain; its full sequence is Kunitz-type conkunitzin-B1 (88 aa).

The first 23 residues, 1-23 (MEGRRFAAVLILPICMLAPGAVA), serve as a signal peptide directing secretion. The 51-residue stretch at 33–83 (CNLPAESGTGTQSLKRFYYNSDKMQCRTFIYKGNGGNDNNFPRTYDCQKKC) folds into the BPTI/Kunitz inhibitor domain. 2 disulfide bridges follow: Cys33–Cys83 and Cys58–Cys79. Pro87 carries the post-translational modification Proline amide.

The protein belongs to the venom Kunitz-type family. Post-translationally, contains 2 disulfide bonds instead of 3, as for all Kunitz domain proteins. In terms of tissue distribution, expressed by the venom duct.

It is found in the secreted. Functionally, blocks specifically voltage-activated potassium channels (Kv) of the Shaker family. This chain is Kunitz-type conkunitzin-B1, found in Conus bullatus (Bubble cone).